A 977-amino-acid polypeptide reads, in one-letter code: Monofunctional C1-tetrahydrofolate synthase, mitochondrial (977 aa).

The N-terminal 31 residues, 1–31, are a transit peptide targeting the mitochondrion; that stretch reads MSVRLPLLLRQLGRQQLPSGPACRLRELCRS. The disordered stretch occupies residues 29-71; the sequence is CRSGSRSSSSGGGDPEGLRGRRLQDGQTFSSHGPGNPEAPGMD. Residues 32-347 are methylenetetrahydrofolate dehydrogenase and cyclohydrolase; the sequence is GSRSSSSGGG…REQQHRRWRL (316 aa). Lysine 188 carries the N6-acetyllysine; alternate modification. At lysine 188 the chain carries N6-succinyllysine; alternate. Positions 348–977 are formyltetrahydrofolate synthetase; sequence HCLKLQPLSP…TETEQVKGLF (630 aa). Serine 356 is subject to Phosphoserine. 422-429 is a binding site for ATP; the sequence is TPLGEGKS. Lysine 595 is subject to N6-succinyllysine.

This sequence in the N-terminal section; belongs to the tetrahydrofolate dehydrogenase/cyclohydrolase family. The protein in the C-terminal section; belongs to the formate--tetrahydrofolate ligase family. In terms of assembly, homodimer.

The protein localises to the mitochondrion. The catalysed reaction is (6S)-5,6,7,8-tetrahydrofolate + formate + ATP = (6R)-10-formyltetrahydrofolate + ADP + phosphate. The protein operates within one-carbon metabolism; tetrahydrofolate interconversion. In terms of biological role, may provide the missing metabolic reaction required to link the mitochondria and the cytoplasm in the mammalian model of one-carbon folate metabolism complementing thus the enzymatic activities of MTHFD2. In Mus musculus (Mouse), this protein is Monofunctional C1-tetrahydrofolate synthase, mitochondrial (Mthfd1l).